A 342-amino-acid polypeptide reads, in one-letter code: UDP-xylose transporter 1 (342 aa).

The next 10 helical transmembrane spans lie at 7-27 (MQMG…SIVI), 36-56 (LGFP…YCTL), 75-95 (VVLF…SLGF), 100-120 (FYQM…TLFL), 132-152 (LFLL…LNFV), 154-174 (SVLS…TNTI), 184-204 (QLLY…GPFV), 221-241 (IVVG…FSTF), 250-270 (VTYQ…GYTL), and 280-300 (IAGI…CSVA). Positions 305–342 (QASSDSTFLGKDRDTTPLLGQENENHHEAKKLDKHSPV) are disordered. The segment covering 327–342 (NENHHEAKKLDKHSPV) has biased composition (basic and acidic residues).

The protein belongs to the TPT transporter family. TPT (TC 2.A.7.9) subfamily. As to expression, ubiquitous.

It localises to the golgi apparatus membrane. Its subcellular location is the endoplasmic reticulum membrane. Its function is as follows. Nucleotide-sugar transporter that transports UDP-xylose and UMP in a strict counter-exchange mode. In Arabidopsis thaliana (Mouse-ear cress), this protein is UDP-xylose transporter 1.